Consider the following 278-residue polypeptide: Acetyl-coenzyme A carboxylase carboxyl transferase subunit beta (278 aa).

Positions 23 to 278 constitute a CoA carboxyltransferase N-terminal domain; the sequence is LWSKCDSCGA…QLIKLLGHMK (256 aa). Zn(2+) is bound by residues Cys-27, Cys-30, Cys-46, and Cys-49. The segment at 27–49 adopts a C4-type zinc-finger fold; it reads CDSCGAALHKKQLEDHLYTCPHC.

This sequence belongs to the AccD/PCCB family. In terms of assembly, acetyl-CoA carboxylase is a heterohexamer composed of biotin carboxyl carrier protein (AccB), biotin carboxylase (AccC) and two subunits each of ACCase subunit alpha (AccA) and ACCase subunit beta (AccD). It depends on Zn(2+) as a cofactor.

Its subcellular location is the cytoplasm. The catalysed reaction is N(6)-carboxybiotinyl-L-lysyl-[protein] + acetyl-CoA = N(6)-biotinyl-L-lysyl-[protein] + malonyl-CoA. The protein operates within lipid metabolism; malonyl-CoA biosynthesis; malonyl-CoA from acetyl-CoA: step 1/1. Component of the acetyl coenzyme A carboxylase (ACC) complex. Biotin carboxylase (BC) catalyzes the carboxylation of biotin on its carrier protein (BCCP) and then the CO(2) group is transferred by the transcarboxylase to acetyl-CoA to form malonyl-CoA. In Chlorobaculum tepidum (strain ATCC 49652 / DSM 12025 / NBRC 103806 / TLS) (Chlorobium tepidum), this protein is Acetyl-coenzyme A carboxylase carboxyl transferase subunit beta.